The sequence spans 514 residues: CENP-B homolog protein 1 (514 aa).

The HTH CENPB-type domain maps to Asp69–Ala144.

It localises to the nucleus. Its subcellular location is the chromosome. The protein resides in the centromere. Binds to centromeric K-type repeat DNA and ARS3002 DNA. The CBH-binding consensus sequence is Py-Pu-A-T-A-T-Py-Pu-T-A. The polypeptide is CENP-B homolog protein 1 (cbh1) (Schizosaccharomyces pombe (strain 972 / ATCC 24843) (Fission yeast)).